The following is a 379-amino-acid chain: Spermidine/putrescine import ATP-binding protein PotA (379 aa).

An ABC transporter domain is found at 10–240 (VTIDQVSKAY…PATDFVAKFI (231 aa)). An ATP-binding site is contributed by 42 to 49 (GPSGCGKT).

This sequence belongs to the ABC transporter superfamily. Spermidine/putrescine importer (TC 3.A.1.11.1) family. The complex is composed of two ATP-binding proteins (PotA), two transmembrane proteins (PotB and PotC) and a solute-binding protein (PotD).

Its subcellular location is the cell inner membrane. The enzyme catalyses ATP + H2O + polyamine-[polyamine-binding protein]Side 1 = ADP + phosphate + polyamineSide 2 + [polyamine-binding protein]Side 1.. Its function is as follows. Part of the ABC transporter complex PotABCD involved in spermidine/putrescine import. Responsible for energy coupling to the transport system. This chain is Spermidine/putrescine import ATP-binding protein PotA, found in Treponema pallidum (strain Nichols).